Consider the following 574-residue polypeptide: Interactor of HORMAD1 protein 1 (574 aa).

Residues 113–133 (GLSKQFEEKKRRATDQSDSET) form a disordered region. Residues 117 to 127 (QFEEKKRRATD) are compositionally biased toward basic and acidic residues. Positions 217–240 (MEMKSTLKNLEVLVVEQTKNLQQF) form a coiled coil. Disordered stretches follow at residues 267–324 (GHLK…GVWD), 372–393 (FSNL…GASQ), and 426–457 (TEQK…DRKQ). Residues 272-284 (STSQTSPSLTQSL) are compositionally biased toward low complexity. Residues 372 to 381 (FSNLPSQRAG) show a composition bias toward polar residues. Residues 431 to 449 (RPCRKRRRGKKQQPQRSKR) show a composition bias toward basic residues. A phosphoserine mark is found at Ser476, Ser569, and Ser570.

As to quaternary structure, part of the MCD recombinosome complex, at least composed of IHO1, REC114 and MEI4. Interacts with REC114. Interacts with MEI4. Interacts with HORMAD1. Interacts with ANKRD31. Detected in spermatocytes and testis (at protein level).

Its subcellular location is the chromosome. Functionally, required for DNA double-strand breaks (DSBs) formation in unsynapsed regions during meiotic recombination. Probably acts by forming a complex with MEI4 and REC114, which activates DSBs formation in unsynapsed regions, an essential step to ensure completion of synapsis. Not required for HORMAD1 functions in pairing-independent synaptonemal complex formation, ATR recruitment to unsynapsed axes, meiotic silencing of unsynapsed chromatin (MSUC) or meiotic surveillance. This is Interactor of HORMAD1 protein 1 from Mus musculus (Mouse).